The chain runs to 388 residues: GTPase Obg (388 aa).

Positions 1 to 159 (MKFVDEAVIK…RELRLELLLL (159 aa)) constitute an Obg domain. Residues 160-333 (ADVGMLGLPN…LCYKLADFME (174 aa)) form the OBG-type G domain. Residues 166–173 (GLPNAGKS), 191–195 (FTTLI), 213–216 (DIPG), 283–286 (NKVD), and 314–316 (SAV) contribute to the GTP site. 2 residues coordinate Mg(2+): serine 173 and threonine 193. Residues 359 to 380 (NQGEVITEDDDDWDDWDDEEDD) are disordered. Over residues 364–380 (ITEDDDDWDDWDDEEDD) the composition is skewed to acidic residues.

This sequence belongs to the TRAFAC class OBG-HflX-like GTPase superfamily. OBG GTPase family. As to quaternary structure, monomer. The cofactor is Mg(2+).

The protein localises to the cytoplasm. An essential GTPase which binds GTP, GDP and possibly (p)ppGpp with moderate affinity, with high nucleotide exchange rates and a fairly low GTP hydrolysis rate. Plays a role in control of the cell cycle, stress response, ribosome biogenesis and in those bacteria that undergo differentiation, in morphogenesis control. The polypeptide is GTPase Obg (Vibrio vulnificus (strain YJ016)).